The following is a 213-amino-acid chain: Ribosomal RNA small subunit methyltransferase G (213 aa).

S-adenosyl-L-methionine contacts are provided by residues glycine 75, phenylalanine 80, 128–129 (IE), and arginine 144.

Belongs to the methyltransferase superfamily. RNA methyltransferase RsmG family.

Its subcellular location is the cytoplasm. The enzyme catalyses guanosine(527) in 16S rRNA + S-adenosyl-L-methionine = N(7)-methylguanosine(527) in 16S rRNA + S-adenosyl-L-homocysteine. In terms of biological role, specifically methylates the N7 position of guanine in position 527 of 16S rRNA. This chain is Ribosomal RNA small subunit methyltransferase G, found in Brucella anthropi (strain ATCC 49188 / DSM 6882 / CCUG 24695 / JCM 21032 / LMG 3331 / NBRC 15819 / NCTC 12168 / Alc 37) (Ochrobactrum anthropi).